We begin with the raw amino-acid sequence, 359 residues long: Norspermidine sensor (359 aa).

Positions 1-33 (MTNFCNEWVSYSQMIKRFLSLMVLNTVCYQASA) are cleaved as a signal peptide.

The protein belongs to the bacterial solute-binding protein PotD/PotF family.

Its subcellular location is the periplasm. Its function is as follows. Acts as a sensor of norspermidine and enhances biofilm formation. When complexed to norspermidine, could interact with the periplasmic portion of MbaA to regulate its enzymatic activity. The polypeptide is Norspermidine sensor (nspS) (Vibrio cholerae serotype O1 (strain ATCC 39315 / El Tor Inaba N16961)).